The sequence spans 232 residues: 7-cyano-7-deazaguanine synthase (232 aa).

8 to 18 contacts ATP; that stretch reads FSGGQDSTTCL. Zn(2+) contacts are provided by C189, C198, C201, and C204.

The protein belongs to the QueC family. Requires Zn(2+) as cofactor.

The enzyme catalyses 7-carboxy-7-deazaguanine + NH4(+) + ATP = 7-cyano-7-deazaguanine + ADP + phosphate + H2O + H(+). It functions in the pathway purine metabolism; 7-cyano-7-deazaguanine biosynthesis. In terms of biological role, catalyzes the ATP-dependent conversion of 7-carboxy-7-deazaguanine (CDG) to 7-cyano-7-deazaguanine (preQ(0)). This Serratia proteamaculans (strain 568) protein is 7-cyano-7-deazaguanine synthase.